Consider the following 419-residue polypeptide: Serine/threonine-protein kinase Kist (419 aa).

Positions 23-304 (WQVQSRLGSG…AEMALCSPFF (282 aa)) constitute a Protein kinase domain. ATP-binding positions include 29–37 (LGSGSSASV) and Lys54. Residues Asp141 and Asp158 each act as proton acceptor in the active site. In terms of domain architecture, RRM spans 324–406 (RLLNVLDDDY…KFVVATFYPL (83 aa)).

Belongs to the protein kinase superfamily. Ser/Thr protein kinase family. As to quaternary structure, interacts with stathmin, PAM and CDKN1B/p27Kip1.

The protein resides in the nucleus. It carries out the reaction L-seryl-[protein] + ATP = O-phospho-L-seryl-[protein] + ADP + H(+). The catalysed reaction is L-threonyl-[protein] + ATP = O-phospho-L-threonyl-[protein] + ADP + H(+). Upon serum stimulation, phosphorylates CDKN1B/p27Kip1, thus controlling CDKN1B subcellular location and cell cycle progression in G1 phase. May be involved in trafficking and/or processing of RNA. The protein is Serine/threonine-protein kinase Kist (UHMK1) of Pongo abelii (Sumatran orangutan).